Reading from the N-terminus, the 229-residue chain is Cytochrome c oxidase subunit 2 (229 aa).

Residues M1–S14 are Mitochondrial intermembrane-facing. The chain crosses the membrane as a helical span at residues P15–L45. Residues L46 to Q59 are Mitochondrial matrix-facing. The chain crosses the membrane as a helical span at residues E60–M87. At D88–S229 the chain is on the mitochondrial intermembrane side. 6 residues coordinate Cu cation: H161, C196, E198, C200, H204, and M207. Residue E198 participates in Mg(2+) binding.

Belongs to the cytochrome c oxidase subunit 2 family. Component of the cytochrome c oxidase (complex IV, CIV), a multisubunit enzyme composed of 14 subunits. The complex is composed of a catalytic core of 3 subunits MT-CO1, MT-CO2 and MT-CO3, encoded in the mitochondrial DNA, and 11 supernumerary subunits COX4I, COX5A, COX5B, COX6A, COX6B, COX6C, COX7A, COX7B, COX7C, COX8 and NDUFA4, which are encoded in the nuclear genome. The complex exists as a monomer or a dimer and forms supercomplexes (SCs) in the inner mitochondrial membrane with NADH-ubiquinone oxidoreductase (complex I, CI) and ubiquinol-cytochrome c oxidoreductase (cytochrome b-c1 complex, complex III, CIII), resulting in different assemblies (supercomplex SCI(1)III(2)IV(1) and megacomplex MCI(2)III(2)IV(2)). Found in a complex with TMEM177, COA6, COX18, COX20, SCO1 and SCO2. Interacts with TMEM177 in a COX20-dependent manner. Interacts with COX20. Interacts with COX16. Cu cation serves as cofactor.

Its subcellular location is the mitochondrion inner membrane. The catalysed reaction is 4 Fe(II)-[cytochrome c] + O2 + 8 H(+)(in) = 4 Fe(III)-[cytochrome c] + 2 H2O + 4 H(+)(out). In terms of biological role, component of the cytochrome c oxidase, the last enzyme in the mitochondrial electron transport chain which drives oxidative phosphorylation. The respiratory chain contains 3 multisubunit complexes succinate dehydrogenase (complex II, CII), ubiquinol-cytochrome c oxidoreductase (cytochrome b-c1 complex, complex III, CIII) and cytochrome c oxidase (complex IV, CIV), that cooperate to transfer electrons derived from NADH and succinate to molecular oxygen, creating an electrochemical gradient over the inner membrane that drives transmembrane transport and the ATP synthase. Cytochrome c oxidase is the component of the respiratory chain that catalyzes the reduction of oxygen to water. Electrons originating from reduced cytochrome c in the intermembrane space (IMS) are transferred via the dinuclear copper A center (CU(A)) of subunit 2 and heme A of subunit 1 to the active site in subunit 1, a binuclear center (BNC) formed by heme A3 and copper B (CU(B)). The BNC reduces molecular oxygen to 2 water molecules using 4 electrons from cytochrome c in the IMS and 4 protons from the mitochondrial matrix. This Alligator mississippiensis (American alligator) protein is Cytochrome c oxidase subunit 2 (MT-CO2).